We begin with the raw amino-acid sequence, 34 residues long: MSDIN-like toxin proprotein 12 (34 aa).

Residues 1–10 (MSDINATRLP) constitute a propeptide that is removed on maturation. Residues 11–19 (HPFPLGLQP) constitute a cross-link (cyclopeptide (His-Pro)). A propeptide spanning residues 20 to 34 (CAGDVDNLTLTKGEG) is cleaved from the precursor.

This sequence belongs to the MSDIN fungal toxin family. Processed by the macrocyclase-peptidase enzyme POPB to yield a toxic cyclic nonapeptide. POPB first removes 10 residues from the N-terminus. Conformational trapping of the remaining peptide forces the enzyme to release this intermediate rather than proceed to macrocyclization. The enzyme rebinds the remaining peptide in a different conformation and catalyzes macrocyclization of the N-terminal 9 residues.

Functionally, probable toxin that belongs to the MSDIN-like toxin family responsible for a large number of food poisoning cases and deaths. The sequence is that of MSDIN-like toxin proprotein 12 from Amanita bisporigera (Destroying angel).